A 568-amino-acid chain; its full sequence is K(+) efflux antiporter 5 (568 aa).

Positions methionine 1–serine 20 are cleaved as a signal peptide. Positions glutamate 59 to valine 78 are disordered. Transmembrane regions (helical) follow at residues leucine 154 to cysteine 174, proline 178 to isoleucine 198, methionine 201 to leucine 221, valine 230 to cysteine 250, glycine 264 to valine 284, isoleucine 298 to leucine 318, leucine 334 to proline 354, leucine 389 to phenylalanine 409, asparagine 422 to tryptophan 442, isoleucine 447 to valine 467, isoleucine 476 to serine 496, and leucine 510 to isoleucine 530.

Belongs to the monovalent cation:proton antiporter 2 (CPA2) transporter (TC 2.A.37) family. KEA (TC 2.A.37.1) subfamily. Expressed in roots, stems, leaves, flowers and silique.

It localises to the golgi apparatus membrane. Its subcellular location is the golgi apparatus. The protein resides in the trans-Golgi network membrane. The protein localises to the prevacuolar compartment membrane. It is found in the endomembrane system. It catalyses the reaction K(+)(in) + H(+)(out) = K(+)(out) + H(+)(in). Electroneutral K(+)/H(+) efflux antiporter involved in K(+) homeostasis and osmotic adjustment. Together with KEA4 and KEA6, promotes growth and development, and facilitates endosomal pH and ions homeostasis, as well as salt tolerance (e.g. K(+), NaCl and LiCl), probably by supporting cell wall biosynthesis during rapid etiolated seedling growth. The chain is K(+) efflux antiporter 5 from Arabidopsis thaliana (Mouse-ear cress).